Consider the following 813-residue polypeptide: Leucine--tRNA ligase (813 aa).

A 'HIGH' region motif is present at residues 42-52; it reads PYTSGNLHIGH. The short motif at 580-584 is the 'KMSKS' region element; that stretch reads KMSKS. ATP is bound at residue Lys-583.

This sequence belongs to the class-I aminoacyl-tRNA synthetase family.

It localises to the cytoplasm. It carries out the reaction tRNA(Leu) + L-leucine + ATP = L-leucyl-tRNA(Leu) + AMP + diphosphate. The chain is Leucine--tRNA ligase from Dehalococcoides mccartyi (strain ATCC BAA-2100 / JCM 16839 / KCTC 5957 / BAV1).